We begin with the raw amino-acid sequence, 462 residues long: Signal recognition particle protein (462 aa).

GTP contacts are provided by residues 107–114, 190–194, and 248–251; these read GLQGAGKT, DTAGR, and TKVD.

It belongs to the GTP-binding SRP family. SRP54 subfamily. In terms of assembly, part of the signal recognition particle protein translocation system, which is composed of SRP and FtsY. SRP is a ribonucleoprotein composed of Ffh and a 4.5S RNA molecule.

It is found in the cytoplasm. It carries out the reaction GTP + H2O = GDP + phosphate + H(+). In terms of biological role, involved in targeting and insertion of nascent membrane proteins into the cytoplasmic membrane. Binds to the hydrophobic signal sequence of the ribosome-nascent chain (RNC) as it emerges from the ribosomes. The SRP-RNC complex is then targeted to the cytoplasmic membrane where it interacts with the SRP receptor FtsY. Interaction with FtsY leads to the transfer of the RNC complex to the Sec translocase for insertion into the membrane, the hydrolysis of GTP by both Ffh and FtsY, and the dissociation of the SRP-FtsY complex into the individual components. The polypeptide is Signal recognition particle protein (Haemophilus influenzae (strain ATCC 51907 / DSM 11121 / KW20 / Rd)).